The chain runs to 749 residues: 5-methyltetrahydropteroyltriglutamate--homocysteine methyltransferase (749 aa).

5-methyltetrahydropteroyltri-L-glutamate is bound by residues arginine 15–lysine 18 and lysine 114. L-homocysteine is bound by residues isoleucine 425–serine 427 and glutamate 478. L-methionine contacts are provided by residues isoleucine 425–serine 427 and glutamate 478. A 5-methyltetrahydropteroyltri-L-glutamate-binding site is contributed by tryptophan 555. Aspartate 593 provides a ligand contact to L-homocysteine. Aspartate 593 serves as a coordination point for L-methionine. Residue glutamate 599 coordinates 5-methyltetrahydropteroyltri-L-glutamate. Zn(2+) is bound by residues histidine 636, cysteine 638, and glutamate 660. Histidine 689 functions as the Proton donor in the catalytic mechanism. Residue cysteine 721 participates in Zn(2+) binding.

This sequence belongs to the vitamin-B12 independent methionine synthase family. Zn(2+) serves as cofactor.

The catalysed reaction is 5-methyltetrahydropteroyltri-L-glutamate + L-homocysteine = tetrahydropteroyltri-L-glutamate + L-methionine. The protein operates within amino-acid biosynthesis; L-methionine biosynthesis via de novo pathway; L-methionine from L-homocysteine (MetE route): step 1/1. In terms of biological role, catalyzes the transfer of a methyl group from 5-methyltetrahydrofolate to homocysteine resulting in methionine formation. This is 5-methyltetrahydropteroyltriglutamate--homocysteine methyltransferase from Streptococcus thermophilus (strain ATCC BAA-491 / LMD-9).